The primary structure comprises 369 residues: Somatostatin receptor type 2 (369 aa).

The Extracellular segment spans residues 1–43 (MEMSSEQLNGSQVWVSSPFDLNGSLGPSNGSNQTEPYYDMTSN). N-linked (GlcNAc...) asparagine glycans are attached at residues N9, N22, N29, and N32. A helical membrane pass occupies residues 44 to 67 (AVLTFIYFVVCVVGLCGNTLVIYV). The Cytoplasmic portion of the chain corresponds to 68–78 (ILRYAKMKTIT). Residues 79–103 (NIYILNLAIADELFMLGLPFLAMQV) traverse the membrane as a helical segment. Topologically, residues 104–118 (ALVHWPFGKAICRVV) are extracellular. C115 and C193 form a disulfide bridge. Residues 119 to 138 (MTVDGINQFTSIFCLTVMSI) form a helical membrane-spanning segment. The Cytoplasmic segment spans residues 139 to 161 (DRYLAVVHPIKSAKWRRPRTAKM). Residues 162–181 (INVAVWCVSLLVILPIMIYA) form a helical membrane-spanning segment. Residues 182 to 207 (GLRSNQWGRSSCTINWPGESGAWYTG) are Extracellular-facing. The helical transmembrane segment at 208–229 (FIIYAFILGFLVPLTIICLCYL) threads the bilayer. The Cytoplasmic segment spans residues 230 to 253 (FIIIKVKSSGIRVGSSKRKKSEKK). A helical transmembrane segment spans residues 254-278 (VTRMVSIVVAVFIFCWLPFYIFNVS). Residues 279–288 (SVSVAISPTP) are Extracellular-facing. The helical transmembrane segment at 289–303 (ALKGMFDFVVILTYA) threads the bilayer. At 304–369 (NSCANPILYA…LLNGDLQTSI (66 aa)) the chain is on the cytoplasmic side. C328 carries the S-palmitoyl cysteine lipid modification. Phosphoserine is present on residues S341, S343, and S348. 2 positions are modified to phosphothreonine: T353 and T354.

The protein belongs to the G-protein coupled receptor 1 family. In terms of assembly, homodimer and heterodimer with SSTR3 and SSTR5. Heterodimerization with SSTR3 inactivates SSTR3 receptor function. Heterodimerization with SSTR5 is enhanced by agonist stimulation of SSTR2 and increases SSTR2 cell growth inhibition activity. Following agonist stimulation, homodimers dissociate into monomers which is required for receptor internalization. Interacts with beta-arrestin; this interaction is necessary for receptor internalization and is destabilized by heterodimerization with SSTR5 which results in increased recycling of SSTR2 to the cell surface. Interacts (via C-terminus) with SHANK1 (via PDZ domain). In terms of processing, phosphorylated on serine and threonine residues in response to agonist stimulation, leading to receptor desensitization and rapid internalization. Phosphorylated to a greater extent on serine than threonine residues. Threonine phosphorylation is required for arrestin binding and receptor endocytosis but is not necessary for desensitization. As to expression, cerebrum and kidney.

Its subcellular location is the cell membrane. The protein localises to the cytoplasm. Functionally, receptor for somatostatin-14 and -28. This receptor is coupled via pertussis toxin sensitive G proteins to inhibition of adenylyl cyclase. In addition it stimulates phosphotyrosine phosphatase and PLC via pertussis toxin insensitive as well as sensitive G proteins. Inhibits calcium entry by suppressing voltage-dependent calcium channels. Acts as the functionally dominant somatostatin receptor in pancreatic alpha- and beta-cells where it mediates the inhibitory effect of somatostatin-14 on hormone secretion. Inhibits cell growth through enhancement of MAPK1 and MAPK2 phosphorylation and subsequent up-regulation of CDKN1B. Stimulates neuronal migration and axon outgrowth and may participate in neuron development and maturation during brain development. Mediates negative regulation of insulin receptor signaling through PTPN6. Inactivates SSTR3 receptor function following heterodimerization. The polypeptide is Somatostatin receptor type 2 (Sstr2) (Mus musculus (Mouse)).